The primary structure comprises 246 residues: Probable septum site-determining protein MinC (246 aa).

The protein belongs to the MinC family. As to quaternary structure, interacts with MinD and FtsZ.

Cell division inhibitor that blocks the formation of polar Z ring septums. Rapidly oscillates between the poles of the cell to destabilize FtsZ filaments that have formed before they mature into polar Z rings. Prevents FtsZ polymerization. In Lachnospira eligens (strain ATCC 27750 / DSM 3376 / VPI C15-48 / C15-B4) (Eubacterium eligens), this protein is Probable septum site-determining protein MinC.